Here is a 160-residue protein sequence, read N- to C-terminus: UPF0178 protein XC_1827 (160 aa).

It belongs to the UPF0178 family.

The chain is UPF0178 protein XC_1827 from Xanthomonas campestris pv. campestris (strain 8004).